The sequence spans 139 residues: Arsenate reductase (139 aa).

Active-site nucleophile residues include C10, C82, and C89. 2 disulfides stabilise this stretch: C10–C82 and C82–C89.

Belongs to the low molecular weight phosphotyrosine protein phosphatase family. Thioredoxin-coupled ArsC subfamily. Monomer.

The protein resides in the cytoplasm. The catalysed reaction is arsenate + [thioredoxin]-dithiol + H(+) = arsenite + [thioredoxin]-disulfide + H2O. Its activity is regulated as follows. Activity is potassium and sulfate-independent. In terms of biological role, catalyzes the reduction of arsenate [As(V)] to arsenite [As(III)]. In vitro, can dephosphorylate para-nitrophenyl phosphate (pNPP). The protein is Arsenate reductase of Bacillus subtilis (strain 168).